Consider the following 534-residue polypeptide: Cytochrome P450 78A9 (534 aa).

Residues 26-46 (LALSLLVASLASLALSLFFWS) traverse the membrane as a helical segment. Cys-474 is a binding site for heme.

It belongs to the cytochrome P450 family. Requires heme as cofactor. In terms of tissue distribution, expressed in the funiculus of developing ovules.

It localises to the membrane. In terms of biological role, plays a role in seed and fruit development. Functions probably in association with CYP78A6 in the regulation of seed growth. In Arabidopsis thaliana (Mouse-ear cress), this protein is Cytochrome P450 78A9 (CYP78A9).